We begin with the raw amino-acid sequence, 499 residues long: Probable folate-biopterin transporter 2 (499 aa).

12 consecutive transmembrane segments (helical) span residues 43 to 63 (WSFVFGVVSLYGINQGLGGSL), 92 to 112 (IPWIIKPLWGILTDVLPIFGF), 116 to 136 (PYFILAGVLGVVSLLFISLHS), 141 to 161 (YLALFWMTISSAAMAIADVTI), 185 to 205 (LSSSIGALLGFFMSGILVHLV), 209 to 229 (GVFGLLTFPFALVSVVGIVFS), 266 to 286 (LYMYISLTLGLNIHEGLFYWF), 302 to 322 (FILSIGSIGSILAATLYQLVL), 330 to 350 (LCLWTQLLFALSGMLDLILVF), 354 to 374 (LKFGLPDYLFIVVDEIVSQMI), 399 to 419 (FALLMSIDNAGLMTSSWLGGI), and 435 to 455 (WLAVLVRNVMRLLPLCFLFLV).

Belongs to the major facilitator superfamily. Folate-biopterin transporter (TC 2.A.71) family.

Its subcellular location is the membrane. Its function is as follows. Could mediate folate transport. In Arabidopsis thaliana (Mouse-ear cress), this protein is Probable folate-biopterin transporter 2.